The chain runs to 406 residues: GTPase Obg (406 aa).

The Obg domain occupies 1–159 (MRFVDEAVIT…REIRLELKVL (159 aa)). The segment at 120–143 (GGEGGLGNTHFKSSTNRAPRKCTT) is disordered. One can recognise an OBG-type G domain in the interval 160–333 (ADVGLLGMPN…VVYYLMDQIE (174 aa)). Residues 166-173 (GMPNAGKS), 191-195 (FTTMV), 213-216 (DIPG), 283-286 (NKLD), and 314-316 (SGL) each bind GTP. Serine 173 and threonine 193 together coordinate Mg(2+). Residues 381–406 (ESMMDDDDDFDDDEDDGDVESIYVRD) form a disordered region. Positions 383-399 (MMDDDDDFDDDEDDGDV) are enriched in acidic residues.

Belongs to the TRAFAC class OBG-HflX-like GTPase superfamily. OBG GTPase family. In terms of assembly, monomer. Requires Mg(2+) as cofactor.

The protein resides in the cytoplasm. Its function is as follows. An essential GTPase which binds GTP, GDP and possibly (p)ppGpp with moderate affinity, with high nucleotide exchange rates and a fairly low GTP hydrolysis rate. Plays a role in control of the cell cycle, stress response, ribosome biogenesis and in those bacteria that undergo differentiation, in morphogenesis control. The sequence is that of GTPase Obg from Acinetobacter baumannii (strain SDF).